Consider the following 304-residue polypeptide: N-acetyl-D-glucosamine kinase (304 aa).

ATP-binding positions include 4 to 11 and 133 to 140; these read GFDIGGTK and GFGGGLIF. Zn(2+) contacts are provided by H157, C178, C180, and C185.

Belongs to the ROK (NagC/XylR) family. NagK subfamily.

The enzyme catalyses N-acetyl-D-glucosamine + ATP = N-acetyl-D-glucosamine 6-phosphate + ADP + H(+). It functions in the pathway cell wall biogenesis; peptidoglycan recycling. Catalyzes the phosphorylation of N-acetyl-D-glucosamine (GlcNAc) derived from cell-wall degradation, yielding GlcNAc-6-P. In Mannheimia succiniciproducens (strain KCTC 0769BP / MBEL55E), this protein is N-acetyl-D-glucosamine kinase.